The chain runs to 132 residues: Small ribosomal subunit protein uS11 (132 aa).

It belongs to the universal ribosomal protein uS11 family. Part of the 30S ribosomal subunit. Interacts with proteins S7 and S18. Binds to IF-3.

Located on the platform of the 30S subunit, it bridges several disparate RNA helices of the 16S rRNA. Forms part of the Shine-Dalgarno cleft in the 70S ribosome. This is Small ribosomal subunit protein uS11 from Oenococcus oeni (strain ATCC BAA-331 / PSU-1).